Here is a 393-residue protein sequence, read N- to C-terminus: Inulin fructotransferase [DFA-I-forming] (393 aa).

The enzyme catalyses Produces alpha-D-fructofuranose beta-D-fructofuranose 1,2':2,1'-dianhydride (DFA I) by successively eliminating the diminishing (2-&gt;1)-beta-D-fructan (inulin) chain from the terminal D-fructosyl-D-fructosyl disaccharide.. This is Inulin fructotransferase [DFA-I-forming] from Arthrobacter globiformis.